The sequence spans 67 residues: Small ribosomal subunit protein eS17 (67 aa).

Belongs to the eukaryotic ribosomal protein eS17 family.

The chain is Small ribosomal subunit protein eS17 from Pyrococcus horikoshii (strain ATCC 700860 / DSM 12428 / JCM 9974 / NBRC 100139 / OT-3).